The primary structure comprises 297 residues: Mitochondrial nicotinamide adenine dinucleotide transporter SLC25A52 (297 aa).

Solcar repeat units lie at residues 28-108, 116-200, and 209-296; these read VGEM…LSCL, PEFA…IKEH, and AHLV…LLKF. Helical transmembrane passes span 34-51, 85-105, 118-138, 179-199, 215-235, and 268-289; these read YLCGCCAAFNNVAITYPI, LPPLMQKTTTLALMFGLYEDL, FATHGVAAVLAGTAEAIFTPL, ILFRNGLSNVLFFGLRGPIKE, FIGGGLLGAMLGFLCFPINVV, and LFRGAHLNYHRSLISWGIINAT.

This sequence belongs to the mitochondrial carrier (TC 2.A.29) family.

The protein resides in the mitochondrion inner membrane. The catalysed reaction is NAD(+)(in) = NAD(+)(out). Functionally, mitochondrial membrane carrier protein that mediates the import of NAD(+) into mitochondria. Compared to SLC25A51, SLC25A52-mediated transport is not essential for the import of NAD(+) in mitochondria. The transport mechanism, uniport or antiport, its electrogenicity and substrate selectivity, remain to be elucidated. This is Mitochondrial nicotinamide adenine dinucleotide transporter SLC25A52 from Homo sapiens (Human).